The sequence spans 100 residues: Small ribosomal subunit protein uS14 (100 aa).

The protein belongs to the universal ribosomal protein uS14 family. As to quaternary structure, part of the 30S ribosomal subunit. Contacts proteins S3 and S10.

Binds 16S rRNA, required for the assembly of 30S particles and may also be responsible for determining the conformation of the 16S rRNA at the A site. The sequence is that of Small ribosomal subunit protein uS14 from Trichodesmium erythraeum (strain IMS101).